Here is a 341-residue protein sequence, read N- to C-terminus: Serpentine receptor class alpha-28 (341 aa).

7 helical membrane-spanning segments follow: residues Phe-25–Leu-45, Leu-57–Leu-77, Tyr-107–Phe-129, Ala-142–Phe-162, Val-188–Ile-208, Ile-242–Ile-262, and Leu-275–Leu-295.

The protein belongs to the nematode receptor-like protein sra family.

The protein localises to the membrane. The sequence is that of Serpentine receptor class alpha-28 (sra-28) from Caenorhabditis elegans.